A 75-amino-acid polypeptide reads, in one-letter code: Kappa-thalatoxin-Cad2a (75 aa).

Positions 1–22 (MKFQMIAAVLLIAFCLCVVVTA) are cleaved as a signal peptide. The propeptide occupies 23 to 40 (RMELQDVEDMKNGSFQKR). One can recognise a ShKT domain in the interval 43–75 (CIDTIPKSRCTAFQCKNSMKYRLSFCRKTCGTC). Disulfide bonds link C43–C75, C52–C68, and C57–C72.

It belongs to the sea anemone type 1 potassium channel toxin family. Type 1a subfamily.

Its subcellular location is the secreted. The protein localises to the nematocyst. Functionally, inhibits voltage-gated potassium channels (Kv) with higher potency for Kv1.1/KCNA1 and Kv1.3/KCNA3. The chain is Kappa-thalatoxin-Cad2a from Cryptodendrum adhaesivum (Adhesive sea anemone).